We begin with the raw amino-acid sequence, 582 residues long: Glutaredoxin domain-containing cysteine-rich protein CG12206 (582 aa).

Residues 217–227 show a composition bias toward polar residues; that stretch reads CETLDSGTGSD. Disordered regions lie at residues 217–244 and 260–300; these read CETL…VRSP and EADH…SCDS. Residues 291–300 show a composition bias toward low complexity; sequence SSNSSLSCDS. Residues 423–528 enclose the Glutaredoxin domain; it reads NVKNYMEKDV…QLLRPYKSIA (106 aa).

The protein belongs to the GRXCR1 family.

In Drosophila melanogaster (Fruit fly), this protein is Glutaredoxin domain-containing cysteine-rich protein CG12206.